Reading from the N-terminus, the 729-residue chain is Fatty acid oxidation complex subunit alpha (729 aa).

The segment at M1–K189 is enoyl-CoA hydratase/isomerase. D296 is a binding site for substrate. The segment at E311–A729 is 3-hydroxyacyl-CoA dehydrogenase. NAD(+)-binding positions include M324, D343, V400–E402, K407, and S429. Catalysis depends on H450, which acts as the For 3-hydroxyacyl-CoA dehydrogenase activity. Position 453 (N453) interacts with NAD(+). Substrate is bound by residues N500 and Y660. The disordered stretch occupies residues R708–A729.

It in the N-terminal section; belongs to the enoyl-CoA hydratase/isomerase family. In the C-terminal section; belongs to the 3-hydroxyacyl-CoA dehydrogenase family. In terms of assembly, heterotetramer of two alpha chains (FadB) and two beta chains (FadA).

The enzyme catalyses a (3S)-3-hydroxyacyl-CoA + NAD(+) = a 3-oxoacyl-CoA + NADH + H(+). The catalysed reaction is a (3S)-3-hydroxyacyl-CoA = a (2E)-enoyl-CoA + H2O. It catalyses the reaction a 4-saturated-(3S)-3-hydroxyacyl-CoA = a (3E)-enoyl-CoA + H2O. It carries out the reaction (3S)-3-hydroxybutanoyl-CoA = (3R)-3-hydroxybutanoyl-CoA. The enzyme catalyses a (3Z)-enoyl-CoA = a 4-saturated (2E)-enoyl-CoA. The catalysed reaction is a (3E)-enoyl-CoA = a 4-saturated (2E)-enoyl-CoA. It participates in lipid metabolism; fatty acid beta-oxidation. In terms of biological role, involved in the aerobic and anaerobic degradation of long-chain fatty acids via beta-oxidation cycle. Catalyzes the formation of 3-oxoacyl-CoA from enoyl-CoA via L-3-hydroxyacyl-CoA. It can also use D-3-hydroxyacyl-CoA and cis-3-enoyl-CoA as substrate. This chain is Fatty acid oxidation complex subunit alpha, found in Salmonella gallinarum (strain 287/91 / NCTC 13346).